We begin with the raw amino-acid sequence, 430 residues long: Probable acetate kinase (430 aa).

Asn-12 contacts Mg(2+). Residue Lys-19 coordinates ATP. Position 100 (Arg-100) interacts with substrate. Asp-159 (proton donor/acceptor) is an active-site residue. 220-224 is an ATP binding site; that stretch reads HLGSG. Residue Glu-416 coordinates Mg(2+).

Belongs to the acetokinase family. Requires Mg(2+) as cofactor.

It carries out the reaction acetate + ATP = acetyl phosphate + ADP. It functions in the pathway metabolic intermediate biosynthesis; acetyl-CoA biosynthesis; acetyl-CoA from acetate: step 1/2. The polypeptide is Probable acetate kinase (Cryptococcus neoformans var. neoformans serotype D (strain B-3501A) (Filobasidiella neoformans)).